Consider the following 401-residue polypeptide: Inactive leucine-rich repeat receptor-like protein kinase CORYNE (401 aa).

An N-terminal signal peptide occupies residues 1-33 (MKQRRRRNGCSSSNTISLLLLFFLVFFSRTSTS). The Extracellular segment spans residues 34 to 62 (TSCRRRTVKHLSTTSTSSTPLESRITSKV). Residues 63 to 83 (IVISIVSGILTGLVSALVLAF) traverse the membrane as a helical segment. Residues 84-401 (LVRSIVKFMK…VHMLTQLHSF (318 aa)) lie on the Cytoplasmic side of the membrane. Residues 118–401 (SNGIQLLGSD…VHMLTQLHSF (284 aa)) enclose the Protein kinase domain. Residues 124 to 132 (LGSDLNGKY) and K146 contribute to the ATP site.

Belongs to the protein kinase superfamily. Ser/Thr protein kinase family. In terms of assembly, self-interacts. Parts of a tetrameric complex made of two CLV2/CRN heterodimers that can interact with CLV3 and CLE peptides. CLV2/CRN heterodimer interacts with CLV1 homodimers. Interacts with CLV1 and CLV2. CLV2/CRN heterodimer can interact with BAM3. Present in roots, stems, leaves, inflorescence, flowers and siliques. Mostly expressed in shoot tips and, to a lesser extent, in young organs and roots. Also expressed in the inner tissues of the proximal root meristem. Expressed in the vascular cylinder of root tips, mostly in phloem poles.

It localises to the cell membrane. The protein localises to the endoplasmic reticulum membrane. Its function is as follows. Involved in the perception of CLV3 and CLV3-like (CLE) peptides, that act as extracellular signals regulating meristem maintenance. Modulates root, shoot and flower apical meristem maintenance and floral organ development regulation, probably via CLAVATA (CLV)-like pathways involving at least CLV3 and CLE19. In complex with CLV2, perceives secreted CLV3-like effector proteins from plant-parasitic cyst nematodes as ligand mimics of the plant CLE signaling pathway. This recognition is required for proper feeding structure (syncytium) development and ultimately successful nematode infection. CLE14 perception by CLV2/CRN complex triggers root meristem differentiation. Required for the sensing of the root CLE peptides (e.g. CLE8, CLE9/CLE10, CLE11, CLE13, CLE14, CLE16, CLE17, CLE18, CLE20, CLE21, CLE25, CLE26, CLE40, CLE41/CLE44 and CLE45), which also involves CLV2 and leads to root growth regulation, mostly in the phloem and protophloem. Promotes the accumulation of BAM3, especially at later stages of protophloem development. This is Inactive leucine-rich repeat receptor-like protein kinase CORYNE from Arabidopsis thaliana (Mouse-ear cress).